We begin with the raw amino-acid sequence, 672 residues long: tRNA 5-methylaminomethyl-2-thiouridine biosynthesis bifunctional protein MnmC (672 aa).

The tRNA (mnm(5)s(2)U34)-methyltransferase stretch occupies residues 1-243 (MTSITHAELG…KREMIAGCME (243 aa)). Residues 269-672 (IGGGIASAAL…LRKGKAITEL (404 aa)) are FAD-dependent cmnm(5)s(2)U34 oxidoreductase.

This sequence in the N-terminal section; belongs to the methyltransferase superfamily. tRNA (mnm(5)s(2)U34)-methyltransferase family. In the C-terminal section; belongs to the DAO family. Requires FAD as cofactor.

The protein resides in the cytoplasm. The catalysed reaction is 5-aminomethyl-2-thiouridine(34) in tRNA + S-adenosyl-L-methionine = 5-methylaminomethyl-2-thiouridine(34) in tRNA + S-adenosyl-L-homocysteine + H(+). Catalyzes the last two steps in the biosynthesis of 5-methylaminomethyl-2-thiouridine (mnm(5)s(2)U) at the wobble position (U34) in tRNA. Catalyzes the FAD-dependent demodification of cmnm(5)s(2)U34 to nm(5)s(2)U34, followed by the transfer of a methyl group from S-adenosyl-L-methionine to nm(5)s(2)U34, to form mnm(5)s(2)U34. This is tRNA 5-methylaminomethyl-2-thiouridine biosynthesis bifunctional protein MnmC from Vibrio vulnificus (strain CMCP6).